Consider the following 301-residue polypeptide: Protoheme IX farnesyltransferase (301 aa).

A run of 9 helical transmembrane segments spans residues 20-42 (FTEL…GMWL), 55-75 (VDVI…SGAF), 105-125 (ALMV…MTTW), 126-146 (QAGV…SLYA), 150-172 (LVSN…WFAV), 176-198 (FSIV…FYAI), 227-247 (MFFW…LGIV), 249-269 (VILA…GFKM), and 280-300 (FVYS…ISIF).

The protein belongs to the UbiA prenyltransferase family. Protoheme IX farnesyltransferase subfamily. Interacts with CtaA.

Its subcellular location is the cell membrane. The catalysed reaction is heme b + (2E,6E)-farnesyl diphosphate + H2O = Fe(II)-heme o + diphosphate. It functions in the pathway porphyrin-containing compound metabolism; heme O biosynthesis; heme O from protoheme: step 1/1. In terms of biological role, converts heme B (protoheme IX) to heme O by substitution of the vinyl group on carbon 2 of heme B porphyrin ring with a hydroxyethyl farnesyl side group. The sequence is that of Protoheme IX farnesyltransferase from Listeria monocytogenes serovar 1/2a (strain ATCC BAA-679 / EGD-e).